The sequence spans 265 residues: Type II pantothenate kinase (265 aa).

ATP is bound at residue 6–13 (DAGGTLIK). E70 serves as the catalytic Proton acceptor. Residues T99, 121–125 (GGMIQ), Y137, and S225 each bind ATP.

Belongs to the type II pantothenate kinase family. Homodimer.

Its subcellular location is the cytoplasm. The enzyme catalyses (R)-pantothenate + ATP = (R)-4'-phosphopantothenate + ADP + H(+). It participates in cofactor biosynthesis; coenzyme A biosynthesis; CoA from (R)-pantothenate: step 1/5. In terms of biological role, catalyzes the phosphorylation of pantothenate (Pan), the first step in CoA biosynthesis. The chain is Type II pantothenate kinase from Staphylococcus epidermidis (strain ATCC 12228 / FDA PCI 1200).